The chain runs to 144 residues: Small ribosomal subunit protein uS12 (144 aa).

Position 103 is a 3-methylthioaspartic acid (aspartate 103). The tract at residues glutamine 125–lysine 144 is disordered. Residues tyrosine 131 to lysine 144 are compositionally biased toward basic residues.

The protein belongs to the universal ribosomal protein uS12 family. In terms of assembly, part of the 30S ribosomal subunit. Contacts proteins S8 and S17. May interact with IF1 in the 30S initiation complex.

Its function is as follows. With S4 and S5 plays an important role in translational accuracy. In terms of biological role, interacts with and stabilizes bases of the 16S rRNA that are involved in tRNA selection in the A site and with the mRNA backbone. Located at the interface of the 30S and 50S subunits, it traverses the body of the 30S subunit contacting proteins on the other side and probably holding the rRNA structure together. The combined cluster of proteins S8, S12 and S17 appears to hold together the shoulder and platform of the 30S subunit. This chain is Small ribosomal subunit protein uS12, found in Dehalococcoides mccartyi (strain ATCC BAA-2100 / JCM 16839 / KCTC 5957 / BAV1).